A 104-amino-acid polypeptide reads, in one-letter code: Protein P-30 (104 aa).

Pyrrolidone carboxylic acid is present on Gln1. The active-site Proton acceptor is the His10. 4 disulfide bridges follow: Cys19–Cys68, Cys30–Cys75, Cys48–Cys90, and Cys87–Cys104. 31-35 (KDKNT) contributes to the substrate binding site. The Proton donor role is filled by His97.

The protein belongs to the pancreatic ribonuclease family.

Its function is as follows. Basic protein with antiproliferative/cytotoxic activity against several tumor cell lines in vitro, as well as antitumor in vivo. It exhibits a ribonuclease-like activity against high molecular weight ribosomal RNA. The chain is Protein P-30 from Lithobates pipiens (Northern leopard frog).